The sequence spans 195 residues: Pyridoxal 5'-phosphate synthase subunit PdxT (195 aa).

46-48 (GES) is an L-glutamine binding site. C78 functions as the Nucleophile in the catalytic mechanism. L-glutamine-binding positions include R106 and 134-135 (IR). Residues H170 and E172 each act as charge relay system in the active site.

This sequence belongs to the glutaminase PdxT/SNO family. In the presence of PdxS, forms a dodecamer of heterodimers. Only shows activity in the heterodimer.

The catalysed reaction is aldehydo-D-ribose 5-phosphate + D-glyceraldehyde 3-phosphate + L-glutamine = pyridoxal 5'-phosphate + L-glutamate + phosphate + 3 H2O + H(+). The enzyme catalyses L-glutamine + H2O = L-glutamate + NH4(+). It participates in cofactor biosynthesis; pyridoxal 5'-phosphate biosynthesis. Its function is as follows. Catalyzes the hydrolysis of glutamine to glutamate and ammonia as part of the biosynthesis of pyridoxal 5'-phosphate. The resulting ammonia molecule is channeled to the active site of PdxS. In Pseudothermotoga lettingae (strain ATCC BAA-301 / DSM 14385 / NBRC 107922 / TMO) (Thermotoga lettingae), this protein is Pyridoxal 5'-phosphate synthase subunit PdxT.